The chain runs to 588 residues: Pescadillo homolog (588 aa).

One can recognise a BRCT domain in the interval Pro344 to Pro437. Disordered stretches follow at residues Ser446–Glu533 and Lys559–Lys588. Positions Asp460–Glu493 are enriched in acidic residues. Basic and acidic residues-rich tracts occupy residues Ser510–Ser519 and Lys576–Lys588. Positions Ile512–Lys588 form a coiled coil.

Belongs to the pescadillo family. In terms of assembly, component of the NOP7 complex, composed of ERB1, NOP7 and YTM1. The complex is held together by ERB1, which interacts with NOP7 via its N-terminal domain and with YTM1 via a high-affinity interaction between the seven-bladed beta-propeller domains of the 2 proteins. The NOP7 complex associates with the 66S pre-ribosome.

The protein resides in the nucleus. The protein localises to the nucleolus. Its subcellular location is the nucleoplasm. In terms of biological role, component of the NOP7 complex, which is required for maturation of the 25S and 5.8S ribosomal RNAs and formation of the 60S ribosome. The polypeptide is Pescadillo homolog (Vanderwaltozyma polyspora (strain ATCC 22028 / DSM 70294 / BCRC 21397 / CBS 2163 / NBRC 10782 / NRRL Y-8283 / UCD 57-17) (Kluyveromyces polysporus)).